Reading from the N-terminus, the 172-residue chain is Adenine phosphoribosyltransferase (172 aa).

It belongs to the purine/pyrimidine phosphoribosyltransferase family. In terms of assembly, homodimer.

The protein resides in the cytoplasm. It catalyses the reaction AMP + diphosphate = 5-phospho-alpha-D-ribose 1-diphosphate + adenine. It participates in purine metabolism; AMP biosynthesis via salvage pathway; AMP from adenine: step 1/1. Catalyzes a salvage reaction resulting in the formation of AMP, that is energically less costly than de novo synthesis. This Clostridium beijerinckii (strain ATCC 51743 / NCIMB 8052) (Clostridium acetobutylicum) protein is Adenine phosphoribosyltransferase.